A 169-amino-acid chain; its full sequence is MPLLDSFTVDHTRMNAPAVRIAKSMVTPKGDTITVFDLRFCVPNKEILSERGIHTLEHLFAGFMREHLNGDSVEIIDISPMGCRTGFYMSLIGAPTESIVADSWLAAMQDVLKVAVQSDIPELNEYQCGTFEMHSLEQAQEIARNIIASGINVNRNDDLSLSEEILKGL.

Fe cation-binding residues include His54, His58, and Cys128.

The protein belongs to the LuxS family. As to quaternary structure, homodimer. The cofactor is Fe cation.

It catalyses the reaction S-(5-deoxy-D-ribos-5-yl)-L-homocysteine = (S)-4,5-dihydroxypentane-2,3-dione + L-homocysteine. Its function is as follows. Involved in the synthesis of autoinducer 2 (AI-2) which is secreted by bacteria and is used to communicate both the cell density and the metabolic potential of the environment. The regulation of gene expression in response to changes in cell density is called quorum sensing. Catalyzes the transformation of S-ribosylhomocysteine (RHC) to homocysteine (HC) and 4,5-dihydroxy-2,3-pentadione (DPD). This chain is S-ribosylhomocysteine lyase, found in Shewanella halifaxensis (strain HAW-EB4).